We begin with the raw amino-acid sequence, 157 residues long: Transcription elongation factor GreA (157 aa).

Residues 1–75 (MSKEIILTQE…VETLINRAKV (75 aa)) adopt a coiled-coil conformation.

Belongs to the GreA/GreB family.

Its function is as follows. Necessary for efficient RNA polymerase transcription elongation past template-encoded arresting sites. The arresting sites in DNA have the property of trapping a certain fraction of elongating RNA polymerases that pass through, resulting in locked ternary complexes. Cleavage of the nascent transcript by cleavage factors such as GreA or GreB allows the resumption of elongation from the new 3'terminus. GreA releases sequences of 2 to 3 nucleotides. This Mycoplasma capricolum subsp. capricolum (strain California kid / ATCC 27343 / NCTC 10154) protein is Transcription elongation factor GreA.